A 324-amino-acid chain; its full sequence is Probable pectinesterase A (324 aa).

A signal peptide spans 1–19 (MYLPSLVLGLLGFGLTAST). Residue Asn27 is glycosylated (N-linked (GlcNAc...) asparagine). Gln142 provides a ligand contact to substrate. The active-site Proton donor is the Asp165. Catalysis depends on Asp186, which acts as the Nucleophile. Positions 246 and 248 each coordinate substrate.

Belongs to the pectinesterase family.

It localises to the secreted. It carries out the reaction [(1-&gt;4)-alpha-D-galacturonosyl methyl ester](n) + n H2O = [(1-&gt;4)-alpha-D-galacturonosyl](n) + n methanol + n H(+). It participates in glycan metabolism; pectin degradation; 2-dehydro-3-deoxy-D-gluconate from pectin: step 1/5. Its function is as follows. Involved in maceration and soft-rotting of plant tissue. The chain is Probable pectinesterase A (pmeA) from Aspergillus fumigatus (strain CBS 144.89 / FGSC A1163 / CEA10) (Neosartorya fumigata).